A 384-amino-acid chain; its full sequence is Dual specificity protein phosphatase 9 (384 aa).

The residue at position 16 (Ser16) is a Phosphoserine. The Rhodanese domain occupies 18–139 (PRPRLLLLDC…FQAECPHLCE (122 aa)). The Tyrosine-protein phosphatase domain occupies 203–346 (FPVQILPNLY…LLDFERSLRL (144 aa)). Ser262 is subject to Phosphoserine. Cys290 acts as the Phosphocysteine intermediate in catalysis. The interval 348–384 (ERHSQEQGSGGQASAASNPPSFFTTPTSDGAFELAPT) is disordered. A Phosphoserine modification is found at Ser351. The span at 359–375 (QASAASNPPSFFTTPTS) shows a compositional bias: polar residues.

It belongs to the protein-tyrosine phosphatase family. Non-receptor class dual specificity subfamily.

It localises to the cytoplasm. The catalysed reaction is O-phospho-L-tyrosyl-[protein] + H2O = L-tyrosyl-[protein] + phosphate. It carries out the reaction O-phospho-L-seryl-[protein] + H2O = L-seryl-[protein] + phosphate. It catalyses the reaction O-phospho-L-threonyl-[protein] + H2O = L-threonyl-[protein] + phosphate. Functionally, inactivates MAP kinases. Has a specificity for the ERK family. The chain is Dual specificity protein phosphatase 9 (DUSP9) from Homo sapiens (Human).